A 148-amino-acid chain; its full sequence is Multiprotein-bridging factor 1c (148 aa).

An HTH cro/C1-type domain is found at 91–145 (IQKARLEKKMSQADLAKQINERTQVVQEYENGKAVPNQAVLAKMEKVLGVKLRGK). The segment at residues 102 to 121 (QADLAKQINERTQVVQEYEN) is a DNA-binding region (H-T-H motif).

The protein belongs to the MBF1 family. Binds to TPS5. Expressed in leaves, roots, stems, flowers, siliques and shoots. Not detected in seeds.

The protein resides in the nucleus. It is found in the nucleolus. It localises to the cytoplasm. Transcriptional coactivator that stimulates transcriptional activity by bridging regulatory proteins and TBP, thereby recruiting TBP to promoters occupied by DNA-binding regulators. Involved in the tolerance to heat and osmotic stress by partially activating the ethylene-response signal transduction pathway. This chain is Multiprotein-bridging factor 1c (MBF1C), found in Arabidopsis thaliana (Mouse-ear cress).